The primary structure comprises 190 residues: Selenoprotein S (190 aa).

Residues 28–48 form a helical membrane-spanning segment; sequence SLLATYGWYIVFCCILLYVVF. The segment at 78–90 is VCP/p97-interacting motif (VIM); that stretch reads RQEALAAARLKMQ. The span at 115–138 shows a compositional bias: basic and acidic residues; that stretch reads KIERWDSVQEGRSYRGDARKRQEE. Positions 115–190 are disordered; sequence KIERWDSVQE…RRGPSSGGUG (76 aa). Ser140 is modified (phosphoserine). Residues 160–174 show a composition bias toward gly residues; sequence RGGGYNPLSGEGGGA. Sec189 is a non-standard amino acid (selenocysteine).

Belongs to the selenoprotein S family. As to quaternary structure, interacts with DERL1 and (via VIM motif) with VCP, suggesting that it forms a membrane complex with DERL1 that serves as a receptor for VCP. Also interacts with DERL2, DERL3 and SELENOK. The SELENOK-SELENOS complex interacts with VCP. Truncated SELENOS proteins produced by failed UGA/Sec decoding are ubiquitinated by the CRL2(KLHDC2) and CRL2(KLHDC3) complexes, which recognizes the glycine (Gly) at the C-terminus of truncated SELENOS proteins. Truncated SELENOS proteins produced by failed UGA/Sec decoding are also ubiquitinated by the CRL5(KLHDC1) complex. As to expression, ubiquitously expressed. Highest expression in liver and lung, with lower levels detected in spleen, kidney, brain, lymph nodes, small intestine, stomach and heart. Very low expression detected in longissimus dorsi.

It localises to the cytoplasm. Its subcellular location is the endoplasmic reticulum membrane. Functionally, involved in the degradation process of misfolded endoplasmic reticulum (ER) luminal proteins. Participates in the transfer of misfolded proteins from the ER to the cytosol, where they are destroyed by the proteasome in a ubiquitin-dependent manner. Probably acts by serving as a linker between DERL1, which mediates the retrotranslocation of misfolded proteins into the cytosol, and the ATPase complex VCP, which mediates the translocation and ubiquitination. In Sus scrofa (Pig), this protein is Selenoprotein S.